Here is a 130-residue protein sequence, read N- to C-terminus: Capsid protein (130 aa).

The segment at 31-104 is viral RNA-binding; that stretch reads EWLSNNSRSQ…FAATDDVTVI (74 aa).

Belongs to the Leviviricetes capsid protein family. In terms of assembly, homodimer. The capsid proteins form dimers that assemble by group of 5. Twelve such pentamers are linked together with free dimers. The homodimers binds to the viral RNA via an operator hairpin, but also to many other RNA sequences in the viral genome; this interaction probably shifts the virus from the replicative to the assembly phase and ensures specific encapsidation of the viral genome.

The protein resides in the virion. In terms of biological role, capsid protein self-assembles to form an icosahedral capsid with a T=3 symmetry, about 26 nm in diameter, and consisting of 89 capsid proteins dimers (178 capsid proteins). Involved in viral genome encapsidation through the interaction between a capsid protein dimer and the multiple packaging signals present in the RNA genome. The capsid also contains 1 copy of the A2 maturation protein. Its function is as follows. Acts as a translational repressor of viral replicase synthesis late in infection. This latter function is the result of capsid protein interaction with an RNA hairpin which contains the replicase ribosome-binding site. In Escherichia coli (Bacteriophage GA), this protein is Capsid protein.